The sequence spans 407 residues: Nuclear hormone receptor family member nhr-134 (407 aa).

An NR C4-type zinc finger spans residues 11 to 31 (CEICGQKTSGRHFGVMSCRSC). The NR C4-type; degenerate zinc finger occupies 47 to 66 (RCPNGNCKLLENGKFKCKKC). In terms of domain architecture, NR LBD spans 157 to 407 (QFHNSLERLA…FSEPDMFEST (251 aa)).

It belongs to the nuclear hormone receptor family.

It is found in the nucleus. Functionally, orphan nuclear receptor. This Caenorhabditis elegans protein is Nuclear hormone receptor family member nhr-134 (nhr-134).